A 130-amino-acid chain; its full sequence is MAENQHYGTGRRKSSAARVFIKPGSGNIVVNQRSLEVYFGRETARMVVYQPLELLNMMNKFDLYITVKGGGISGQAGAIRHGITRALMAYDESLRPELRKAGFVTRDAREVERKKVGFRKARRRPQFSKR.

It belongs to the universal ribosomal protein uS9 family.

The protein is Small ribosomal subunit protein uS9 of Hamiltonella defensa subsp. Acyrthosiphon pisum (strain 5AT).